The sequence spans 518 residues: Ethanolamine kinase (518 aa).

Polar residues predominate over residues 1 to 19; it reads MGTETKSNSYTGQISTSGG. The disordered stretch occupies residues 1-88; the sequence is MGTETKSNSY…DIRAKPEDKS (88 aa). Over residues 33-68 the composition is skewed to low complexity; it reads QTVNQQTLSLSQSNQVQNQLNSHSNSNSYPNPSGSE. A compositionally biased stretch (basic and acidic residues) spans 69–88; sequence NKNENEQNSRDIRAKPEDKS. Phosphoserine is present on residues Ser-190 and Ser-194.

Belongs to the choline/ethanolamine kinase family.

It localises to the cytoplasm. The enzyme catalyses ethanolamine + ATP = phosphoethanolamine + ADP + H(+). It participates in phospholipid metabolism; phosphatidylethanolamine biosynthesis; phosphatidylethanolamine from ethanolamine: step 1/3. Functionally, highly specific for ethanolamine phosphorylation. May be a rate-controlling step in phosphatidylethanolamine biosynthesis. This chain is Ethanolamine kinase (eas), found in Drosophila melanogaster (Fruit fly).